The primary structure comprises 1218 residues: Thrombospondin type 1 domain-containing protein (1218 aa).

4 disordered regions span residues serine 82–serine 101, serine 189–arginine 240, histidine 298–leucine 383, and glycine 445–glycine 471. A compositionally biased stretch (basic and acidic residues) spans glycine 201–serine 210. Positions serine 315–serine 375 are enriched in low complexity. Residues serine 638 to proline 704 enclose the TSP type-1 domain. Residues glycine 886–valine 906 form a helical membrane-spanning segment. The tract at residues arginine 1129–alanine 1153 is disordered.

In terms of assembly, component of a complex, at least composed of cysteine repeat modular protein A (CRMPa), cysteine repeat modular protein B (CRMPb), micronemal protein 15 (MIC15) and thrombospondin type 1 domain-containing protein (TSP1).

The protein resides in the membrane. Functionally, required for rhoptry secretion. Plays a role in host cell invasion. This Toxoplasma gondii protein is Thrombospondin type 1 domain-containing protein.